Consider the following 289-residue polypeptide: Energy-coupling factor transporter ATP-binding protein EcfA2 (289 aa).

The ABC transporter domain occupies 3–246 (IQAKKLNYTY…PEWLKNHHLN (244 aa)). An ATP-binding site is contributed by 40 to 47 (GHTGSGKS).

It belongs to the ABC transporter superfamily. Energy-coupling factor EcfA family. As to quaternary structure, forms a stable energy-coupling factor (ECF) transporter complex composed of 2 membrane-embedded substrate-binding proteins (S component), 2 ATP-binding proteins (A component) and 2 transmembrane proteins (T component).

The protein resides in the cell membrane. ATP-binding (A) component of a common energy-coupling factor (ECF) ABC-transporter complex. Unlike classic ABC transporters this ECF transporter provides the energy necessary to transport a number of different substrates. The protein is Energy-coupling factor transporter ATP-binding protein EcfA2 of Ligilactobacillus salivarius (strain UCC118) (Lactobacillus salivarius).